The sequence spans 348 residues: Methylthioribose-1-phosphate isomerase (348 aa).

Substrate contacts are provided by residues 47–49 (RGA), Arg-90, and Gln-196. The active-site Proton donor is Asp-237. 247 to 248 (NK) is a substrate binding site.

This sequence belongs to the eIF-2B alpha/beta/delta subunits family. MtnA subfamily.

It carries out the reaction 5-(methylsulfanyl)-alpha-D-ribose 1-phosphate = 5-(methylsulfanyl)-D-ribulose 1-phosphate. It participates in amino-acid biosynthesis; L-methionine biosynthesis via salvage pathway; L-methionine from S-methyl-5-thio-alpha-D-ribose 1-phosphate: step 1/6. In terms of biological role, catalyzes the interconversion of methylthioribose-1-phosphate (MTR-1-P) into methylthioribulose-1-phosphate (MTRu-1-P). This Synechococcus sp. (strain ATCC 27144 / PCC 6301 / SAUG 1402/1) (Anacystis nidulans) protein is Methylthioribose-1-phosphate isomerase.